We begin with the raw amino-acid sequence, 79 residues long: Small ribosomal subunit protein bS16 (79 aa).

This sequence belongs to the bacterial ribosomal protein bS16 family.

The polypeptide is Small ribosomal subunit protein bS16 (Marinobacter nauticus (strain ATCC 700491 / DSM 11845 / VT8) (Marinobacter aquaeolei)).